The following is an 89-amino-acid chain: Small ribosomal subunit protein uS15 (89 aa).

Residues 1 to 22 (MALEKEEKSQIINNYQLHETDT) are disordered. Over residues 10 to 22 (QIINNYQLHETDT) the composition is skewed to polar residues.

It belongs to the universal ribosomal protein uS15 family. Part of the 30S ribosomal subunit. Forms a bridge to the 50S subunit in the 70S ribosome, contacting the 23S rRNA.

Functionally, one of the primary rRNA binding proteins, it binds directly to 16S rRNA where it helps nucleate assembly of the platform of the 30S subunit by binding and bridging several RNA helices of the 16S rRNA. Its function is as follows. Forms an intersubunit bridge (bridge B4) with the 23S rRNA of the 50S subunit in the ribosome. This chain is Small ribosomal subunit protein uS15, found in Chloroflexus aggregans (strain MD-66 / DSM 9485).